The following is a 977-amino-acid chain: GAS2-like protein pickled eggs (977 aa).

In terms of domain architecture, Calponin-homology (CH) spans 20-159 (EAMREDLAEW…CLLEVARRGA (140 aa)). The interval 218-245 (VETDLYDDSDDSETEDDGDQNPVLMYGP) is disordered. Over residues 221-236 (DLYDDSDDSETEDDGD) the composition is skewed to acidic residues. Positions 252 to 324 (NDLKSLDEMV…HYLDKHDPCR (73 aa)) constitute a GAR domain. Disordered stretches follow at residues 397-543 (PTLQ…SEIS), 557-624 (AQKR…VCDG), 666-685 (VANT…RSPL), 693-803 (IDNS…KGRS), and 910-977 (NLER…TELY). 2 stretches are compositionally biased toward polar residues: residues 399–428 (LQNG…NQQA) and 436–454 (ATGS…QLLG). Residues 502 to 527 (GGSGVGSAAGGVSSGSAGSGVAGEQG) show a composition bias toward gly residues. Over residues 577-589 (RLDQTSSDSQISP) the composition is skewed to polar residues. Residues 601-620 (ILEEEDLNGQDREEDQEDYS) are compositionally biased toward acidic residues. 2 stretches are compositionally biased toward polar residues: residues 666–677 (VANTMGNPTPNL) and 731–741 (TRNSTGATTTP). The segment covering 928–953 (SSAASSCESNNSNAGAGSGAAAGSAS) has biased composition (low complexity).

This sequence belongs to the GAS2 family. Expressed in the ovary and the ring canals of the germline cells. In larvae, expressed in the notal region of the wing disk.

The protein resides in the cytoplasm. It is found in the cytoskeleton. Its subcellular location is the cell cortex. Its function is as follows. Essential for development and viability. Required for ovary development and oogenesis, and is essential for the development of the indirect flight muscles. May act as a negative regulator of the Notch signaling pathway in certain tissues, such as the muscle precursors and ovaries. May function as a linker protein between the actin and microtubule cytoskeletons. This is GAS2-like protein pickled eggs from Drosophila melanogaster (Fruit fly).